We begin with the raw amino-acid sequence, 397 residues long: Lysophospholipid transporter LplT (397 aa).

The Periplasmic portion of the chain corresponds to 1 to 17; sequence MSESVHTNTSLWSKGMK. A helical membrane pass occupies residues 18-38; it reads AVIVAQFLSAFGDNALLFATL. Over 39–52 the chain is Cytoplasmic; the sequence is ALLKAQFYPEWSQP. A helical transmembrane segment spans residues 53-73; that stretch reads ILQMVFVGAYILFAPFVGQVA. At 74–90 the chain is on the periplasmic side; that stretch reads DSFAKGRVMMFANGLKL. The helical transmembrane segment at 91 to 111 threads the bilayer; that stretch reads LGAASICFGINPFLGYTLVGV. Topologically, residues 112 to 144 are cytoplasmic; that stretch reads GAAAYSPAKYGILGELTTGSKLVKANGLMEAST. The chain crosses the membrane as a helical span at residues 145 to 165; sequence IAAILLGSVAGGVLADWHILV. Ala166 is a topological domain (periplasmic). The helical transmembrane segment at 167-187 threads the bilayer; sequence LVACALAYGGAVVANIYIPKL. Residues 188 to 226 are Cytoplasmic-facing; that stretch reads AAARPGQSWNLISMTRSFLNACTSLWRNGETRFSLVGTS. A helical transmembrane segment spans residues 227–247; sequence LFWGAGVTLRFLLVLWVPVAL. The Periplasmic portion of the chain corresponds to 248–256; sequence GITDNATPT. The helical transmembrane segment at 257 to 277 threads the bilayer; sequence YLNAMVAIGIVVGAGAAAKLV. Residues 278-280 are Cytoplasmic-facing; sequence TLE. The helical transmembrane segment at 281–301 threads the bilayer; it reads TVSRCMPAGILIGVVVLIFSL. At 302-304 the chain is on the periplasmic side; it reads QHE. A helical transmembrane segment spans residues 305-325; the sequence is LLPAYALLMLIGVLGGFFVVP. The Cytoplasmic portion of the chain corresponds to 326-343; sequence LNALLQERGKKSVGAGNA. A helical membrane pass occupies residues 344-364; the sequence is IAVQNLGENSAMLLMLGIYSL. At 365 to 366 the chain is on the periplasmic side; sequence AV. The chain crosses the membrane as a helical span at residues 367–387; the sequence is MVGIPVVPIGIGFGALFALAI. Residues 388-397 lie on the Cytoplasmic side of the membrane; that stretch reads TALWIWQRRH.

It belongs to the major facilitator superfamily. LplT (TC 2.A.1.42) family.

It is found in the cell inner membrane. Functionally, catalyzes the facilitated diffusion of 2-acyl-glycero-3-phosphoethanolamine (2-acyl-GPE) into the cell. The sequence is that of Lysophospholipid transporter LplT from Escherichia coli O81 (strain ED1a).